We begin with the raw amino-acid sequence, 359 residues long: MASAQRHSTPDLVRQRDPAGVSGLSLGLTSSEFAGLHEGAVPDVTYRELFFPHADPPRRLQNWARSRGVRLRTLTRIGRDQGGRSEKMLFGLHDGYAVESVLIRRFDGHTACISSQVGCAFACRFCASGQAGLMRNLEAGEIVEQVVRLGPKVNRIVFMGIGEPLNNYQQVLKAIRILRDRQGMNFPTTGITLSTIGIPKALKQLREEHLAINLTISLHATTQEVRDRLIPGARKHPLGEVVERACAWARRHNRPVTFAYLVLPGINDSIADARRLAAMLRDSPARVNLMRWNPVDGVGLQRTPDRSLAHFRTTLENALVPVVVRDTQGRDISAACGQLWLRDLKGLPVGNRPRQGRMT.

Glutamate 99 acts as the Proton acceptor in catalysis. The Radical SAM core domain occupies 105–330 (RFDGHTACIS…PVVVRDTQGR (226 aa)). A disulfide bridge links cysteine 112 with cysteine 336. Positions 119, 123, and 126 each coordinate [4Fe-4S] cluster. S-adenosyl-L-methionine-binding positions include 162–163 (GE), serine 194, 217–219 (SLH), and asparagine 293. The active-site S-methylcysteine intermediate is the cysteine 336.

This sequence belongs to the radical SAM superfamily. RlmN family. [4Fe-4S] cluster is required as a cofactor.

The protein resides in the cytoplasm. The protein is Probable RNA methyltransferase RPD_2859 of Rhodopseudomonas palustris (strain BisB5).